Reading from the N-terminus, the 270-residue chain is Thiazole synthase (270 aa).

Lys112 acts as the Schiff-base intermediate with DXP in catalysis. Residues Gly173, Ala199–Gly200, and Asn221–Ser222 contribute to the 1-deoxy-D-xylulose 5-phosphate site.

This sequence belongs to the ThiG family. Homotetramer. Forms heterodimers with either ThiH or ThiS.

Its subcellular location is the cytoplasm. It carries out the reaction [ThiS sulfur-carrier protein]-C-terminal-Gly-aminoethanethioate + 2-iminoacetate + 1-deoxy-D-xylulose 5-phosphate = [ThiS sulfur-carrier protein]-C-terminal Gly-Gly + 2-[(2R,5Z)-2-carboxy-4-methylthiazol-5(2H)-ylidene]ethyl phosphate + 2 H2O + H(+). Its pathway is cofactor biosynthesis; thiamine diphosphate biosynthesis. Functionally, catalyzes the rearrangement of 1-deoxy-D-xylulose 5-phosphate (DXP) to produce the thiazole phosphate moiety of thiamine. Sulfur is provided by the thiocarboxylate moiety of the carrier protein ThiS. In vitro, sulfur can be provided by H(2)S. The polypeptide is Thiazole synthase (Pseudomonas entomophila (strain L48)).